Reading from the N-terminus, the 285-residue chain is Eukaryotic translation initiation factor 3 subunit J (285 aa).

2 disordered regions span residues 1–86 (MSWD…QLDE) and 232–285 (QARL…DDFM). Over residues 22–41 (WEDEEDDGPVLESWDVDPEE) the composition is skewed to acidic residues. The stretch at 36–81 (DVDPEEEEKKKKEAKLQEAKRKAELKAKEDAEKAKKDAKRKELEQF) forms a coiled coil. Positions 42 to 86 (EEKKKKEAKLQEAKRKAELKAKEDAEKAKKDAKRKELEQFDQLDE) are enriched in basic and acidic residues. A compositionally biased stretch (acidic residues) spans 269–285 (DDMDDGQFDDLDDDDFM).

The protein belongs to the eIF-3 subunit J family. Component of the eukaryotic translation initiation factor 3 (eIF-3) complex.

The protein resides in the cytoplasm. Functionally, component of the eukaryotic translation initiation factor 3 (eIF-3) complex, which is involved in protein synthesis of a specialized repertoire of mRNAs and, together with other initiation factors, stimulates binding of mRNA and methionyl-tRNAi to the 40S ribosome. The eIF-3 complex specifically targets and initiates translation of a subset of mRNAs involved in cell proliferation. In Candida albicans (strain SC5314 / ATCC MYA-2876) (Yeast), this protein is Eukaryotic translation initiation factor 3 subunit J.